The following is a 347-amino-acid chain: S-adenosylmethionine:tRNA ribosyltransferase-isomerase (347 aa).

Belongs to the QueA family. Monomer.

The protein resides in the cytoplasm. It catalyses the reaction 7-aminomethyl-7-carbaguanosine(34) in tRNA + S-adenosyl-L-methionine = epoxyqueuosine(34) in tRNA + adenine + L-methionine + 2 H(+). Its pathway is tRNA modification; tRNA-queuosine biosynthesis. Functionally, transfers and isomerizes the ribose moiety from AdoMet to the 7-aminomethyl group of 7-deazaguanine (preQ1-tRNA) to give epoxyqueuosine (oQ-tRNA). This chain is S-adenosylmethionine:tRNA ribosyltransferase-isomerase, found in Bordetella parapertussis (strain 12822 / ATCC BAA-587 / NCTC 13253).